A 760-amino-acid polypeptide reads, in one-letter code: MKKTIQILLFFFFLINLTNALSISSDGGVLSDNEVRHIQRRQLLEFAERSVKITVDPSLNFENPRLRNAYIALQAWKQAILSDPNNFTSNWIGSNVCNYTGVFCSPALDNRKIRTVAGIDLNHADIAGYLPEELGLLSDLALFHVNSNRFCGTVPHRFNRLKLLFELDLSNNRFAGKFPTVVLQLPSLKFLDLRFNEFEGTVPKELFSKDLDAIFINHNRFRFELPENFGDSPVSVIVLANNRFHGCVPSSLVEMKNLNEIIFMNNGLNSCLPSDIGRLKNVTVFDVSFNELVGPLPESVGEMVSVEQLNVAHNMLSGKIPASICQLPKLENFTYSYNFFTGEAPVCLRLPEFDDRRNCLPGRPAQRSPGQCKAFLSRPPVNCGSFSCGRSVSPRPPVVTPLPPPSLPSPPPPAPIFSTPPTLTSPPPPSPPPPVYSPPPPPPPPPPVYSPPPPPPPPPPPPVYSPPPPPPPPPPPPPVYSPPPPSPPPPPPPVYSPPPPPPPPPPPPVYSPPPPPVYSSPPPPPSPAPTPVYCTRPPPPPPHSPPPPQFSPPPPEPYYYSSPPPPHSSPPPHSPPPPHSPPPPIYPYLSPPPPPTPVSSPPPTPVYSPPPPPPCIEPPPPPPCIEYSPPPPPPVVHYSSPPPPPVYYSSPPPPPVYYSSPPPPPPVHYSSPPPPEVHYHSPPPSPVHYSSPPPPPSAPCEESPPPAPVVHHSPPPPMVHHSPPPPVIHQSPPPPSPEYEGPLPPVIGVSYASPPPPPFY.

The N-terminal stretch at 1-20 (MKKTIQILLFFFFLINLTNA) is a signal peptide. N-linked (GlcNAc...) asparagine glycosylation is present at asparagine 16. Residues 21 to 45 (LSISSDGGVLSDNEVRHIQRRQLLE) form an LRR 1 repeat. Asparagine 86 and asparagine 98 each carry an N-linked (GlcNAc...) asparagine glycan. LRR repeat units lie at residues 113–137 (IRTVAGIDLNHADIAGYLPEELGLL), 138–160 (SDLALFHVNSNRFCGTVPHRFNR), 161–185 (LKLLFELDLSNNRFAGKFPTVVLQL), 186–209 (PSLKFLDLRFNEFEGTVPKELFSK), 211–232 (LDAIFINHNRFRFELPENFGDS), 234–255 (VSVIVLANNRFHGCVPSSLVEM), 256–279 (KNLNEIIFMNNGLNSCLPSDIGRL), 281–303 (NVTVFDVSFNELVGPLPESVGEM), and 304–327 (VSVEQLNVAHNMLSGKIPASICQL). The N-linked (GlcNAc...) asparagine glycan is linked to asparagine 281. Asparagine 332 carries an N-linked (GlcNAc...) asparagine glycan. Disordered regions lie at residues 389–502 (GRSV…PPPP), 515–610 (PPVY…YSPP), and 663–748 (PPPP…PVIG). 2 stretches are compositionally biased toward pro residues: residues 394–415 (PRPPVVTPLPPPSLPSPPPPAP) and 423–502 (LTSP…PPPP). Positions 409–758 (SPPPPAPIFS…VSYASPPPPP (350 aa)) are contains the Ser-Pro(4) repeats. Pro residues predominate over residues 663-745 (PPPPVHYSSP…SPEYEGPLPP (83 aa)).

In terms of assembly, interacts with SH3P1. In terms of processing, hydroxylated on proline residues in the S-P-P-P-P repeat. Post-translationally, O-glycosylated on hydroxyprolines. As to expression, expressed in roots, stems, leaves and flowers, mostly in vascular tissues.

Its subcellular location is the secreted. The protein localises to the cell wall. Its function is as follows. Modulates cell morphogenesis by regulating cell wall formation and assembly, and/or growth polarization. The polypeptide is Leucine-rich repeat extensin-like protein 3 (LRX3) (Arabidopsis thaliana (Mouse-ear cress)).